We begin with the raw amino-acid sequence, 511 residues long: Glucans biosynthesis protein G (511 aa).

An N-terminal signal peptide occupies residues M1–A22.

This sequence belongs to the OpgD/OpgG family.

Its subcellular location is the periplasm. The protein operates within glycan metabolism; osmoregulated periplasmic glucan (OPG) biosynthesis. Involved in the biosynthesis of osmoregulated periplasmic glucans (OPGs). In Escherichia coli O8 (strain IAI1), this protein is Glucans biosynthesis protein G.